A 437-amino-acid chain; its full sequence is Zinc finger CCCH domain-containing protein 40 (437 aa).

The C3H1-type zinc-finger motif lies at 6–33 (MYKTKLCILFNKTGDCSRPNCTFAHGNA). The disordered stretch occupies residues 35–107 (LRRPGESSFT…MPFENRRDKD (73 aa)). A compositionally biased stretch (basic and acidic residues) spans 48-85 (HNMDSDLRDRRHNMDSDLRDRLGRQFSPERRPSLDRSG). Residues 145-244 (NNVLEEQLKD…LGNQLSTYLA (100 aa)) are a coiled coil. Ser259 is subject to Phosphoserine. Disordered regions lie at residues 266–360 (RNLR…RRRF) and 380–437 (EFDD…DDSV). A compositionally biased stretch (basic and acidic residues) spans 307 to 319 (RGEEEKVENEKKR). Composition is skewed to acidic residues over residues 333–343 (EEESGAWNDED) and 383–392 (DVAESEEENP). Positions 426–437 (MEQKKAYDDDSV) are enriched in basic and acidic residues.

The protein is Zinc finger CCCH domain-containing protein 40 of Arabidopsis thaliana (Mouse-ear cress).